Here is a 344-residue protein sequence, read N- to C-terminus: Holliday junction branch migration complex subunit RuvB (344 aa).

Residues 1-181 (MERIVTPAEM…FGVLCAMEYY (181 aa)) are large ATPase domain (RuvB-L). Residues Leu20, Arg21, Gly62, Lys65, Thr66, Thr67, 128–130 (EDY), Arg171, Tyr181, and Arg218 contribute to the ATP site. Thr66 is a binding site for Mg(2+). The segment at 182-252 (DETQLKEIVI…EARDALELLE (71 aa)) is small ATPAse domain (RuvB-S). Residues 255 to 344 (NQGFDKVDNK…SNKGQTSFFK (90 aa)) are head domain (RuvB-H). Positions 310 and 315 each coordinate DNA.

This sequence belongs to the RuvB family. In terms of assembly, homohexamer. Forms an RuvA(8)-RuvB(12)-Holliday junction (HJ) complex. HJ DNA is sandwiched between 2 RuvA tetramers; dsDNA enters through RuvA and exits via RuvB. An RuvB hexamer assembles on each DNA strand where it exits the tetramer. Each RuvB hexamer is contacted by two RuvA subunits (via domain III) on 2 adjacent RuvB subunits; this complex drives branch migration. In the full resolvosome a probable DNA-RuvA(4)-RuvB(12)-RuvC(2) complex forms which resolves the HJ.

It is found in the cytoplasm. The enzyme catalyses ATP + H2O = ADP + phosphate + H(+). The RuvA-RuvB-RuvC complex processes Holliday junction (HJ) DNA during genetic recombination and DNA repair, while the RuvA-RuvB complex plays an important role in the rescue of blocked DNA replication forks via replication fork reversal (RFR). RuvA specifically binds to HJ cruciform DNA, conferring on it an open structure. The RuvB hexamer acts as an ATP-dependent pump, pulling dsDNA into and through the RuvAB complex. RuvB forms 2 homohexamers on either side of HJ DNA bound by 1 or 2 RuvA tetramers; 4 subunits per hexamer contact DNA at a time. Coordinated motions by a converter formed by DNA-disengaged RuvB subunits stimulates ATP hydrolysis and nucleotide exchange. Immobilization of the converter enables RuvB to convert the ATP-contained energy into a lever motion, pulling 2 nucleotides of DNA out of the RuvA tetramer per ATP hydrolyzed, thus driving DNA branch migration. The RuvB motors rotate together with the DNA substrate, which together with the progressing nucleotide cycle form the mechanistic basis for DNA recombination by continuous HJ branch migration. Branch migration allows RuvC to scan DNA until it finds its consensus sequence, where it cleaves and resolves cruciform DNA. The protein is Holliday junction branch migration complex subunit RuvB of Clostridium botulinum (strain Eklund 17B / Type B).